The following is a 474-amino-acid chain: GTPase Der (474 aa).

EngA-type G domains lie at 2-166 (LRIA…NVPE) and 212-385 (LKIA…ETVS). GTP is bound by residues 8–15 (GRPNVGKS), 55–59 (DTGGV), 118–121 (NKAD), 218–225 (GRPNVGKS), 265–269 (DTAGL), and 330–333 (NKWD). The KH-like domain maps to 386-470 (SKVPTPVVNK…PFDLEFKEKT (85 aa)).

This sequence belongs to the TRAFAC class TrmE-Era-EngA-EngB-Septin-like GTPase superfamily. EngA (Der) GTPase family. Associates with the 50S ribosomal subunit.

In terms of biological role, GTPase that plays an essential role in the late steps of ribosome biogenesis. This chain is GTPase Der, found in Chlamydia caviae (strain ATCC VR-813 / DSM 19441 / 03DC25 / GPIC) (Chlamydophila caviae).